The sequence spans 342 residues: Probable dual-specificity RNA methyltransferase RlmN (342 aa).

Glu-91 (proton acceptor) is an active-site residue. Positions 97 to 326 (YRFGNTACVS…CTVRRELGSD (230 aa)) constitute a Radical SAM core domain. A disulfide bridge links Cys-104 with Cys-331. [4Fe-4S] cluster is bound by residues Cys-111, Cys-115, and Cys-118. Residues 157–158 (GE), Ser-189, 212–214 (SLH), and Asn-288 each bind S-adenosyl-L-methionine. The active-site S-methylcysteine intermediate is Cys-331.

The protein belongs to the radical SAM superfamily. RlmN family. Requires [4Fe-4S] cluster as cofactor.

Its subcellular location is the cytoplasm. The enzyme catalyses adenosine(2503) in 23S rRNA + 2 reduced [2Fe-2S]-[ferredoxin] + 2 S-adenosyl-L-methionine = 2-methyladenosine(2503) in 23S rRNA + 5'-deoxyadenosine + L-methionine + 2 oxidized [2Fe-2S]-[ferredoxin] + S-adenosyl-L-homocysteine. It catalyses the reaction adenosine(37) in tRNA + 2 reduced [2Fe-2S]-[ferredoxin] + 2 S-adenosyl-L-methionine = 2-methyladenosine(37) in tRNA + 5'-deoxyadenosine + L-methionine + 2 oxidized [2Fe-2S]-[ferredoxin] + S-adenosyl-L-homocysteine. In terms of biological role, specifically methylates position 2 of adenine 2503 in 23S rRNA and position 2 of adenine 37 in tRNAs. The sequence is that of Probable dual-specificity RNA methyltransferase RlmN from Thermoanaerobacter pseudethanolicus (strain ATCC 33223 / 39E) (Clostridium thermohydrosulfuricum).